The following is a 1172-amino-acid chain: DNA-directed RNA polymerase subunit beta (1172 aa).

Belongs to the RNA polymerase beta chain family. The RNAP catalytic core consists of 2 alpha, 1 beta, 1 beta' and 1 omega subunit. When a sigma factor is associated with the core the holoenzyme is formed, which can initiate transcription.

It catalyses the reaction RNA(n) + a ribonucleoside 5'-triphosphate = RNA(n+1) + diphosphate. Functionally, DNA-dependent RNA polymerase catalyzes the transcription of DNA into RNA using the four ribonucleoside triphosphates as substrates. The sequence is that of DNA-directed RNA polymerase subunit beta from Mycobacterium sp. (strain KMS).